Reading from the N-terminus, the 355-residue chain is Receptor-like serine/threonine-protein kinase At1g78530 (355 aa).

At 1-8 (MANAKETT) the chain is on the extracellular side. The chain crosses the membrane as a helical span at residues 9 to 29 (FYITISVVAFVIGKIVIALLF). The Cytoplasmic portion of the chain corresponds to 30–355 (YKRWKRKHTI…YIKLSTRSSF (326 aa)). One can recognise a Protein kinase domain in the interval 75 to 347 (LSNKDILGSG…TEVVKLLEYI (273 aa)). ATP-binding positions include 81–89 (LGSGGFGTV) and Lys-103. Position 148 is a phosphotyrosine (Tyr-148). The active-site Proton acceptor is the Asp-197. Ser-201 and Ser-230 each carry phosphoserine. Phosphothreonine occurs at positions 231 and 236. At Tyr-244 the chain carries Phosphotyrosine.

The protein belongs to the protein kinase superfamily. Ser/Thr protein kinase family.

The protein localises to the cell membrane. It carries out the reaction L-seryl-[protein] + ATP = O-phospho-L-seryl-[protein] + ADP + H(+). The catalysed reaction is L-threonyl-[protein] + ATP = O-phospho-L-threonyl-[protein] + ADP + H(+). This Arabidopsis thaliana (Mouse-ear cress) protein is Receptor-like serine/threonine-protein kinase At1g78530.